Consider the following 301-residue polypeptide: ATP synthase F(0) complex subunit B1, mitochondrial (301 aa).

The transit peptide at 1 to 21 (MSLSRLSSPQTFSRVFIVARG) directs the protein to the mitochondrion.

The protein belongs to the eukaryotic ATPase B chain family. Subunit of the F-type ATPase which has 2 components, CF(1) - the catalytic core - and CF(0) - the membrane proton channel.

The protein localises to the mitochondrion. Its subcellular location is the mitochondrion inner membrane. Its function is as follows. Mitochondrial membrane ATP synthase (F(1)F(0) ATP synthase or Complex V) produces ATP from ADP in the presence of a proton gradient across the membrane which is generated by electron transport complexes of the respiratory chain. F-type ATPases consist of two structural domains, F(1) - containing the extramembraneous catalytic core, and F(0) - containing the membrane proton channel, linked together by a central stalk and a peripheral stalk. During catalysis, ATP synthesis in the catalytic domain of F(1) is coupled via a rotary mechanism of the central stalk subunits to proton translocation. Part of the complex F(0) domain and the peripheric stalk, which acts as a stator to hold the subunits of the catalytic subcomplexes relative to the rotary elements. Plays a role in germline development. The chain is ATP synthase F(0) complex subunit B1, mitochondrial from Caenorhabditis elegans.